A 485-amino-acid chain; its full sequence is Neuropeptide F receptor (485 aa).

Residues 1 to 91 (MIISMNQTEP…DSPWYHMLIS (91 aa)) lie on the Extracellular side of the membrane. A helical membrane pass occupies residues 92 to 112 (MYGVLIVFGALGNTLVVIAVI). The Cytoplasmic portion of the chain corresponds to 113–122 (RKPIMRTARN). Residues 123-143 (LFILNLAISDLLLCLVTMPLT) form a helical membrane-spanning segment. Topologically, residues 144-163 (LMEILSKYWPYGSCSILCKT) are extracellular. Cysteine 161 and cysteine 248 are oxidised to a cystine. A helical transmembrane segment spans residues 164-184 (IAMLQALCIFVSTISITAIAF). Residues 185–202 (DRYQVIVYPTRDSLQFVG) are Cytoplasmic-facing. A helical transmembrane segment spans residues 203 to 223 (AVTILAGIWALALLLASPLFV). Residues 224-262 (YKELINTDTPALLQQIGLQDTIPYCIEDWPSRNGRFYYS) are Extracellular-facing. A helical transmembrane segment spans residues 263 to 283 (IFSLCVQYLVPILIVSVAYFG). Residues 284–317 (IYNKLKSRITVVAVQASSAQRKVERGRRMKRTNC) are Cytoplasmic-facing. Residues 318 to 338 (LLISIAIIFGVSWLPLNFFNL) traverse the membrane as a helical segment. The Extracellular portion of the chain corresponds to 339–355 (YADMERSPVTQSMLVRY). The helical transmembrane segment at 356-376 (AICHMIGMSSACSNPLLYGWL) threads the bilayer. Over 377 to 485 (NDNFRKEFQE…PSEVTKLMPR (109 aa)) the chain is Cytoplasmic.

This sequence belongs to the G-protein coupled receptor 1 family. In terms of tissue distribution, expressed in midgut, brain lobes and ventral nerve cord of larvae. In adults, expressed in a pair of dorsolateral neurons in the protocerebrum, and the central complex and a small number of neurons in the subesophageal ganglion (at protein level). Expressed in a subset of sugar-responsive PAIN neurons in the thoracic body but is absent from other peripheral PAIN neurons.

Its subcellular location is the membrane. In terms of biological role, receptor for NPF. Integral part of the sensory system that mediates food signaling, providing the neural basis for the regulation of food response; coordinates larval foraging and social behavior changes during development. Required in dopaminergic (DA) neurons that innervate the mushroom body for satiety to suppress appetitive memory performance; a key factor in the internal state of hunger in the brain. NPF neurons coordinately modulate diverse sensory and motor neurons important for feeding, flight, and locomotion. NPF/NPFR pathway exerts its suppressive effect on larval aversion to diverse stressful stimuli (chemical stress and noxious heat) through attenuation of TRP channel-induced neuronal excitation. NPF neural signaling system plays a physiological role in acute modulation of alcohol sensitivity in adults, rather than a general response to intoxication by sedative agents. Activation and inhibition of the NPF system reduces and enhances ethanol preference, respectively. Sexual experience, the NPF system activity and ethanol consumption are all linked; sexual deprivation is a major contributor to enhanced ethanol preference. This is Neuropeptide F receptor from Drosophila melanogaster (Fruit fly).